A 335-amino-acid polypeptide reads, in one-letter code: Leukocyte immunoglobulin-like receptor subfamily B member 4A (335 aa).

The first 23 residues, 1-23 (MIAMLTVLLYLGLILEPRTAVQA), serve as a signal peptide directing secretion. Over 24 to 238 (GHLPKPIIWA…TEDGLETYQK (215 aa)) the chain is Extracellular. 2 Ig-like C2-type domains span residues 42–125 (YTSV…ENPS) and 124–212 (PSLS…KPSN). Residues cysteine 49 and cysteine 98 are joined by a disulfide bond. Residues asparagine 133 and asparagine 191 are each glycosylated (N-linked (GlcNAc...) asparagine). The cysteines at positions 144 and 196 are disulfide-linked. A helical membrane pass occupies residues 239–260 (ILIGVLVSFLLLFFLLLFLILI). The Cytoplasmic segment spans residues 261-335 (GYQYGHKKKA…CIRTQEQNNS (75 aa)). Short sequence motifs (ITIM motif) lie at residues 298–303 (IVYAQV) and 320–325 (VTYAQL).

Interacts (when tyrosine phosphorylated) with SH2 domain-containing phosphatases PTPN6/SHP-1 and PTPN11/SHP-2; interaction with PTPN6 enhances inhibition of mast cell activation. In terms of processing, tyrosine phosphorylated. Expressed on mast cells and natural killer cells (at protein level). Expressed on neutrophils (at protein level). Expressed on eosinophils (at protein level). Expressed on dendritic cells (at protein level). Expressed on memory and marginal zone B cells (at protein level). Expressed on CD8 T cells (at protein level). Expressed in the uterus of pregnant mice where it is detected at day 4.0 of pregnancy with levels dropping at day 4.5. Highly expressed in the luminal epithelium of uterine endometrium with lower levels in the glandular epithelium.

The protein resides in the cell membrane. Functionally, inhibitory receptor involved in the down-regulation of the immune response. Receptor for FN1. Receptor for integrin ITGAV/ITGB3. Inhibits IgE-mediated mast cell activation, at least in part through interaction with ITGAV/ITGB3. Also inhibits KITLG/SCF-mediated mast cell activation. Through interaction with ITGAV/ITGB3, inhibits antibody production by memory and marginal zone B cells, probably by suppressing their differentiation into plasma cells. Inhibits IFNG production by CD8 T cells, CD4 T cells and natural killer cells. Inhibits antigen presentation by dendritic cells to T cells, preventing T cell activation. Inhibits lipopolysaccharide-mediated neutrophil-dependent vascular injury. Suppresses the allergic inflammatory response by inhibiting infiltration of neutrophils and eosinophils and preventing mast cell degranulation. Inhibits lysis by natural killer cells. The protein is Leukocyte immunoglobulin-like receptor subfamily B member 4A of Mus musculus (Mouse).